The sequence spans 193 residues: Secreted RxLR effector protein 126 (193 aa).

Positions 1-20 are cleaved as a signal peptide; sequence MRYLLAVLIAAAFVISSGTS. Positions 50-64 match the RxLR-dEER motif; it reads RMLQTKAVNGLEEER.

This sequence belongs to the RxLR effector family.

It localises to the secreted. It is found in the host membrane. Functionally, secreted effector that completely suppresses the host cell death induced by cell death-inducing proteins. The sequence is that of Secreted RxLR effector protein 126 from Plasmopara viticola (Downy mildew of grapevine).